We begin with the raw amino-acid sequence, 368 residues long: Reverse transcriptase-like protein (368 aa).

Residues 91–318 enclose the Reverse transcriptase domain; it reads TRELTVPYWY…SELNWLGHKV (228 aa).

Its subcellular location is the mitochondrion. This chain is Reverse transcriptase-like protein (RTL), found in Chlamydomonas reinhardtii (Chlamydomonas smithii).